Consider the following 132-residue polypeptide: Myelin P2 protein (132 aa).

An N-acetylserine modification is found at Ser2. Arg107 is a binding site for (9Z)-octadecenoate. Arg107 contributes to the hexadecanoate binding site. Cys118 and Cys125 are disulfide-bonded. 127-129 (RIY) provides a ligand contact to (9Z)-octadecenoate. Residue 127–129 (RIY) coordinates hexadecanoate.

Belongs to the calycin superfamily. Fatty-acid binding protein (FABP) family. In terms of assembly, monomer.

It localises to the cytoplasm. May play a role in lipid transport protein in Schwann cells. May bind cholesterol. This is Myelin P2 protein (PMP2) from Bos taurus (Bovine).